The primary structure comprises 1240 residues: Neurofascin (1240 aa).

The N-terminal stretch at 1–24 (MARQQAPPWVHIALILFLLSLGGA) is a signal peptide. At 25 to 1110 (IEIPMDPSIQ…NQADIATQGW (1086 aa)) the chain is on the extracellular side. Ig-like C2-type domains are found at residues 41-137 (PTIT…LQVS), 143-230 (PKEN…NPFT), 244-332 (PSFM…ISVR), 337-424 (PYWL…AFVS), 430-517 (PRML…VRLE), and 521-603 (PTRI…QDLA). Cystine bridges form between Cys-63–Cys-118, Cys-162–Cys-213, Cys-268–Cys-316, and Cys-358–Cys-408. Residue Asn-305 is glycosylated (N-linked (GlcNAc...) asparagine). N-linked (GlcNAc...) asparagine glycans are attached at residues Asn-409 and Asn-446. 2 disulfide bridges follow: Cys-452/Cys-501 and Cys-543/Cys-592. Tyr-481 is subject to Phosphotyrosine. A glycan (N-linked (GlcNAc...) asparagine) is linked at Asn-483. The residue at position 485 (Ser-485) is a Phosphoserine. Fibronectin type-III domains are found at residues 630 to 725 (RPRD…TSGA), 727 to 823 (PESN…SGED), 827 to 923 (APRR…PNEA), and 1007 to 1099 (APDE…TAYT). Residues 710 to 740 (SSHPSLPSERYRTSGAPPESNPSDVKGEGTR) are disordered. Residues Asn-752, Asn-778, Asn-866, and Asn-881 are each glycosylated (N-linked (GlcNAc...) asparagine). Positions 902 to 942 (ARTQVGSGEAATEESPAPPNEATPTAAPPTLPPTTVGTTGL) are disordered. Positions 907–916 (GSGEAATEES) are enriched in low complexity. Pro residues predominate over residues 917 to 933 (PAPPNEATPTAAPPTLP). The chain crosses the membrane as a helical span at residues 1111 to 1131 (FIGLMCAIALLVLILLIVCFI). The Cytoplasmic portion of the chain corresponds to 1132–1240 (KRSRGGKYPV…SPVNAIYSLA (109 aa)). Residues 1141–1240 (VREKKDVPLG…SPVNAIYSLA (100 aa)) are disordered. Acidic residues predominate over residues 1154 to 1165 (PKEEDGSFDYSD). Residues Ser-1160, Ser-1174, Ser-1187, Ser-1190, Ser-1226, Ser-1227, and Ser-1231 each carry the phosphoserine modification. The segment covering 1171-1184 (LQGSQTSLDGTIKQ) has biased composition (polar residues).

The protein belongs to the immunoglobulin superfamily. L1/neurofascin/NgCAM family. In terms of assembly, horseshoe-shaped homodimer. Probable constituent of a NFASC/NRCAM/ankyrin-G complex. Associates with the sodium channel beta-1 (SCN1B) and beta-3 (SCN3B) subunits. Interacts with GLDN/gliomedin. Interacts with MYOC.

Its subcellular location is the cell membrane. Its function is as follows. Cell adhesion, ankyrin-binding protein which may be involved in neurite extension, axonal guidance, synaptogenesis, myelination and neuron-glial cell interactions. The sequence is that of Neurofascin (Nfasc) from Mus musculus (Mouse).